Reading from the N-terminus, the 302-residue chain is tRNA dimethylallyltransferase (302 aa).

ATP is bound at residue 21–28; that stretch reads GPTASGKS. 23 to 28 lines the substrate pocket; sequence TASGKS.

This sequence belongs to the IPP transferase family. In terms of assembly, monomer. The cofactor is Mg(2+).

It catalyses the reaction adenosine(37) in tRNA + dimethylallyl diphosphate = N(6)-dimethylallyladenosine(37) in tRNA + diphosphate. Catalyzes the transfer of a dimethylallyl group onto the adenine at position 37 in tRNAs that read codons beginning with uridine, leading to the formation of N6-(dimethylallyl)adenosine (i(6)A). The protein is tRNA dimethylallyltransferase of Paracoccus denitrificans (strain Pd 1222).